The primary structure comprises 178 residues: Cytochrome b6-f complex iron-sulfur subunit 3 (178 aa).

The chain crosses the membrane as a helical span at residues 20-42; it reads FITGATVAVTAGAALYPAGKFLI. The Rieske domain maps to 65–161; sequence PASQILAEPP…VAVIDNSILI (97 aa). Positions 107, 109, 125, and 128 each coordinate [2Fe-2S] cluster. The cysteines at positions 112 and 127 are disulfide-linked.

The protein belongs to the Rieske iron-sulfur protein family. The 4 large subunits of the cytochrome b6-f complex are cytochrome b6, subunit IV (17 kDa polypeptide, PetD), cytochrome f and the Rieske protein, while the 4 small subunits are PetG, PetL, PetM and PetN. The complex functions as a dimer. Requires [2Fe-2S] cluster as cofactor.

The protein resides in the cellular thylakoid membrane. The enzyme catalyses 2 oxidized [plastocyanin] + a plastoquinol + 2 H(+)(in) = 2 reduced [plastocyanin] + a plastoquinone + 4 H(+)(out). In terms of biological role, component of the cytochrome b6-f complex, which mediates electron transfer between photosystem II (PSII) and photosystem I (PSI), cyclic electron flow around PSI, and state transitions. The protein is Cytochrome b6-f complex iron-sulfur subunit 3 of Nostoc sp. (strain PCC 7120 / SAG 25.82 / UTEX 2576).